Reading from the N-terminus, the 92-residue chain is Small ribosomal subunit protein uS19 (92 aa).

The protein belongs to the universal ribosomal protein uS19 family.

Its function is as follows. Protein S19 forms a complex with S13 that binds strongly to the 16S ribosomal RNA. In Buchnera aphidicola subsp. Schizaphis graminum (strain Sg), this protein is Small ribosomal subunit protein uS19.